A 417-amino-acid polypeptide reads, in one-letter code: Serine hydroxymethyltransferase 2 (417 aa).

(6S)-5,6,7,8-tetrahydrofolate-binding positions include Leu-121 and 125–127 (GHL). The residue at position 229 (Lys-229) is an N6-(pyridoxal phosphate)lysine. 354–356 (SPF) serves as a coordination point for (6S)-5,6,7,8-tetrahydrofolate.

This sequence belongs to the SHMT family. In terms of assembly, homodimer. The cofactor is pyridoxal 5'-phosphate.

The protein resides in the cytoplasm. It carries out the reaction (6R)-5,10-methylene-5,6,7,8-tetrahydrofolate + glycine + H2O = (6S)-5,6,7,8-tetrahydrofolate + L-serine. The protein operates within one-carbon metabolism; tetrahydrofolate interconversion. It participates in amino-acid biosynthesis; glycine biosynthesis; glycine from L-serine: step 1/1. Catalyzes the reversible interconversion of serine and glycine with tetrahydrofolate (THF) serving as the one-carbon carrier. This reaction serves as the major source of one-carbon groups required for the biosynthesis of purines, thymidylate, methionine, and other important biomolecules. Also exhibits THF-independent aldolase activity toward beta-hydroxyamino acids, producing glycine and aldehydes, via a retro-aldol mechanism. The protein is Serine hydroxymethyltransferase 2 of Pseudomonas fluorescens (strain Pf0-1).